The chain runs to 136 residues: Ribonuclease VapC1 (136 aa).

The PINc domain maps to 18–129 (ILVDTSVLID…KKHFERLKEF (112 aa)). Positions 21 and 101 each coordinate Mg(2+).

This sequence belongs to the PINc/VapC protein family. Requires Mg(2+) as cofactor.

Toxic component of a type II toxin-antitoxin (TA) system. An RNase. Its cognate antitoxin is VapB1. This is Ribonuclease VapC1 from Methanocaldococcus jannaschii (strain ATCC 43067 / DSM 2661 / JAL-1 / JCM 10045 / NBRC 100440) (Methanococcus jannaschii).